Here is a 436-residue protein sequence, read N- to C-terminus: ATP-dependent protease ATPase subunit HslU (436 aa).

ATP contacts are provided by residues I19, 61–65, D249, E314, and R386; that span reads GVGKT.

The protein belongs to the ClpX chaperone family. HslU subfamily. In terms of assembly, a double ring-shaped homohexamer of HslV is capped on each side by a ring-shaped HslU homohexamer. The assembly of the HslU/HslV complex is dependent on binding of ATP.

The protein localises to the cytoplasm. Functionally, ATPase subunit of a proteasome-like degradation complex; this subunit has chaperone activity. The binding of ATP and its subsequent hydrolysis by HslU are essential for unfolding of protein substrates subsequently hydrolyzed by HslV. HslU recognizes the N-terminal part of its protein substrates and unfolds these before they are guided to HslV for hydrolysis. The chain is ATP-dependent protease ATPase subunit HslU from Bartonella tribocorum (strain CIP 105476 / IBS 506).